The following is a 504-amino-acid chain: ATP synthase subunit alpha, chloroplastic (504 aa).

An ATP-binding site is contributed by 170 to 177 (GDRQTGKT).

It belongs to the ATPase alpha/beta chains family. In terms of assembly, F-type ATPases have 2 components, CF(1) - the catalytic core - and CF(0) - the membrane proton channel. CF(1) has five subunits: alpha(3), beta(3), gamma(1), delta(1), epsilon(1). CF(0) has four main subunits: a, b, b' and c.

Its subcellular location is the plastid. It is found in the chloroplast thylakoid membrane. The catalysed reaction is ATP + H2O + 4 H(+)(in) = ADP + phosphate + 5 H(+)(out). Functionally, produces ATP from ADP in the presence of a proton gradient across the membrane. The alpha chain is a regulatory subunit. In Porphyra purpurea (Red seaweed), this protein is ATP synthase subunit alpha, chloroplastic.